A 147-amino-acid chain; its full sequence is Siroheme decarboxylase NirG subunit (147 aa).

The protein belongs to the Ahb/Nir family. As to quaternary structure, probably forms a complex composed of NirD, NirL, NirG and NirH. All proteins are required for the total conversion of siroheme to didecarboxysiroheme.

The enzyme catalyses siroheme + 2 H(+) = 12,18-didecarboxysiroheme + 2 CO2. The protein operates within porphyrin-containing compound metabolism. Involved in heme d1 biosynthesis. Catalyzes the decarboxylation of siroheme into didecarboxysiroheme. The sequence is that of Siroheme decarboxylase NirG subunit from Stutzerimonas stutzeri (Pseudomonas stutzeri).